The primary structure comprises 901 residues: Translation initiation factor IF-2 (901 aa).

The tract at residues 48–313 is disordered; that stretch reads HLNREHGGSS…SSLQQGFTKP (266 aa). Residues 68 to 82 are compositionally biased toward polar residues; the sequence is STLSVPGTGGKSKSV. Basic and acidic residues predominate over residues 106 to 226; that stretch reads ALAKREAEEQ…RMAEANEGKW (121 aa). Positions 263–277 are enriched in basic residues; that stretch reads ARGRGGKAAKQKKGS. The span at 278–291 shows a compositional bias: basic and acidic residues; sequence KLSESKADREEARA. The tr-type G domain occupies 400 to 569; that stretch reads PRAPVVTIMG…LLQAEVLELK (170 aa). Residues 409 to 416 form a G1 region; sequence GHVDHGKT. 409–416 is a GTP binding site; sequence GHVDHGKT. The interval 434-438 is G2; it reads GITQH. The interval 455 to 458 is G3; that stretch reads DTPG. Residues 455–459 and 509–512 contribute to the GTP site; these read DTPGH and NKID. Residues 509–512 are G4; it reads NKID. Residues 545–547 form a G5 region; the sequence is SAK.

Belongs to the TRAFAC class translation factor GTPase superfamily. Classic translation factor GTPase family. IF-2 subfamily.

It is found in the cytoplasm. Functionally, one of the essential components for the initiation of protein synthesis. Protects formylmethionyl-tRNA from spontaneous hydrolysis and promotes its binding to the 30S ribosomal subunits. Also involved in the hydrolysis of GTP during the formation of the 70S ribosomal complex. This Edwardsiella ictaluri (strain 93-146) protein is Translation initiation factor IF-2.